A 157-amino-acid polypeptide reads, in one-letter code: SsrA-binding protein (157 aa).

The span at 134–151 shows a compositional bias: basic and acidic residues; that stretch reads HDKRETEKKRDWSKEKGR. The disordered stretch occupies residues 134 to 157; the sequence is HDKRETEKKRDWSKEKGRLMRAKG.

The protein belongs to the SmpB family.

The protein localises to the cytoplasm. Required for rescue of stalled ribosomes mediated by trans-translation. Binds to transfer-messenger RNA (tmRNA), required for stable association of tmRNA with ribosomes. tmRNA and SmpB together mimic tRNA shape, replacing the anticodon stem-loop with SmpB. tmRNA is encoded by the ssrA gene; the 2 termini fold to resemble tRNA(Ala) and it encodes a 'tag peptide', a short internal open reading frame. During trans-translation Ala-aminoacylated tmRNA acts like a tRNA, entering the A-site of stalled ribosomes, displacing the stalled mRNA. The ribosome then switches to translate the ORF on the tmRNA; the nascent peptide is terminated with the 'tag peptide' encoded by the tmRNA and targeted for degradation. The ribosome is freed to recommence translation, which seems to be the essential function of trans-translation. This chain is SsrA-binding protein, found in Rhodopseudomonas palustris (strain BisA53).